Here is a 958-residue protein sequence, read N- to C-terminus: Dermatan-sulfate epimerase (958 aa).

An N-terminal signal peptide occupies residues 1-22 (MRTHTRGAPSVFFIYLLCFVSA). Residues 23–902 (YITDENPEVM…APSLSASYTR (880 aa)) are Lumenal-facing. Asn183 carries N-linked (GlcNAc...) (complex) asparagine glycosylation. The active-site Proton donor is the His205. The active site involves Tyr261. The N-linked (GlcNAc...) (high mannose) asparagine glycan is linked to Asn336. Asn411 is a glycosylation site (N-linked (GlcNAc...) (complex) asparagine). Positions 452 and 470 each coordinate Mn(2+). The active site involves Tyr473. Residue Asn481 participates in Mn(2+) binding. The N-linked (GlcNAc...) (complex) asparagine glycan is linked to Asn642. An N-linked (GlcNAc...) (paucimannose) asparagine glycan is attached at Asn648. The helical transmembrane segment at 903-923 (LFLILNIAIFFVMLAMQLTYF) threads the bilayer. Topologically, residues 924–933 (QRAQSLHGQR) are cytoplasmic. Residues 934-954 (CLYAVLLIDSCILLWLYSSCS) form a helical membrane-spanning segment. The Lumenal segment spans residues 955–958 (QSQC).

This sequence belongs to the dermatan-sulfate isomerase family. Requires Mn(2+) as cofactor. In terms of processing, N-glycosylated. Glycosylation is important for enzymatic activity. Ubiquitously expressed with higher expression in kidney and ovary and lower expression in brain, colon and thymus. Also expressed in renal cell carcinomas, brain tumors, and in a part of melanomas and adenocarcinomas from organs other than the breast. Expressed in squamous cell carcinomas (SCC), glioma, and some adenocarcinoma cell lines, but not in breast cancer cell lines or any normal tissues (at protein level).

The protein resides in the endoplasmic reticulum membrane. The protein localises to the golgi apparatus membrane. Its subcellular location is the cytoplasmic vesicle membrane. It is found in the microsome membrane. It carries out the reaction chondroitin 4'-sulfate = dermatan 4'-sulfate. The protein operates within glycan metabolism; chondroitin sulfate biosynthesis. Its pathway is glycan metabolism; heparan sulfate biosynthesis. Functionally, converts D-glucuronic acid to L-iduronic acid (IdoUA) residues. Plays an important role in the biosynthesis of the glycosaminoglycan/mucopolysaccharide dermatan sulfate. The protein is Dermatan-sulfate epimerase (DSE) of Homo sapiens (Human).